Consider the following 283-residue polypeptide: NAD kinase (283 aa).

D66 (proton acceptor) is an active-site residue. NAD(+)-binding positions include D66–G67, R71, N137–D138, H165, D167, and T178–S183.

This sequence belongs to the NAD kinase family. Requires a divalent metal cation as cofactor.

It is found in the cytoplasm. It carries out the reaction NAD(+) + ATP = ADP + NADP(+) + H(+). Involved in the regulation of the intracellular balance of NAD and NADP, and is a key enzyme in the biosynthesis of NADP. Catalyzes specifically the phosphorylation on 2'-hydroxyl of the adenosine moiety of NAD to yield NADP. This is NAD kinase from Agathobacter rectalis (strain ATCC 33656 / DSM 3377 / JCM 17463 / KCTC 5835 / VPI 0990) (Eubacterium rectale).